We begin with the raw amino-acid sequence, 341 residues long: Small ribosomal subunit protein uS3 (341 aa).

The region spanning 38–106 (IRRMMTRGME…QVQLNILEVK (69 aa)) is the KH type-2 domain. Disordered regions lie at residues 224-246 (RAVRGRSARREQPAAESPALETA) and 274-341 (PAGQ…TKEG). Composition is skewed to low complexity over residues 285–303 (AEQPVVTAEPAAAAAVTGE) and 311–333 (AAPAEPTTSAAAEEAPGGADAPS).

The protein belongs to the universal ribosomal protein uS3 family. In terms of assembly, part of the 30S ribosomal subunit. Forms a tight complex with proteins S10 and S14.

In terms of biological role, binds the lower part of the 30S subunit head. Binds mRNA in the 70S ribosome, positioning it for translation. This is Small ribosomal subunit protein uS3 from Acidothermus cellulolyticus (strain ATCC 43068 / DSM 8971 / 11B).